Consider the following 513-residue polypeptide: UDP-N-acetylmuramyl-tripeptide synthetase (513 aa).

Ser-38 is a UDP-N-acetyl-alpha-D-muramoyl-L-alanyl-D-glutamate binding site. Residue 115–121 participates in ATP binding; the sequence is GTKGKTT. Residues 161–162, Ser-188, and Arg-196 each bind UDP-N-acetyl-alpha-D-muramoyl-L-alanyl-D-glutamate; that span reads TT. Lys-230 is subject to N6-carboxylysine.

The protein belongs to the MurCDEF family. MurE subfamily. Carboxylation is probably crucial for Mg(2+) binding and, consequently, for the gamma-phosphate positioning of ATP.

The protein resides in the cytoplasm. It participates in cell wall biogenesis; peptidoglycan biosynthesis. In terms of biological role, catalyzes the addition of an amino acid to the nucleotide precursor UDP-N-acetylmuramoyl-L-alanyl-D-glutamate (UMAG) in the biosynthesis of bacterial cell-wall peptidoglycan. The chain is UDP-N-acetylmuramyl-tripeptide synthetase from Latilactobacillus sakei subsp. sakei (strain 23K) (Lactobacillus sakei subsp. sakei).